A 213-amino-acid polypeptide reads, in one-letter code: Orotate phosphoribosyltransferase (213 aa).

Lys26 provides a ligand contact to 5-phospho-alpha-D-ribose 1-diphosphate. Residue 34 to 35 participates in orotate binding; the sequence is FF. 5-phospho-alpha-D-ribose 1-diphosphate is bound by residues 72–73, Arg99, Lys100, Lys103, His105, and 124–132; these read YK and DDVITAGTA. Residues Thr128 and Arg156 each contribute to the orotate site.

Belongs to the purine/pyrimidine phosphoribosyltransferase family. PyrE subfamily. Homodimer. Mg(2+) serves as cofactor.

The catalysed reaction is orotidine 5'-phosphate + diphosphate = orotate + 5-phospho-alpha-D-ribose 1-diphosphate. It participates in pyrimidine metabolism; UMP biosynthesis via de novo pathway; UMP from orotate: step 1/2. Catalyzes the transfer of a ribosyl phosphate group from 5-phosphoribose 1-diphosphate to orotate, leading to the formation of orotidine monophosphate (OMP). The sequence is that of Orotate phosphoribosyltransferase from Saccharophagus degradans (strain 2-40 / ATCC 43961 / DSM 17024).